Consider the following 196-residue polypeptide: 3-isopropylmalate dehydratase small subunit (196 aa).

This sequence belongs to the LeuD family. LeuD type 1 subfamily. Heterodimer of LeuC and LeuD.

The catalysed reaction is (2R,3S)-3-isopropylmalate = (2S)-2-isopropylmalate. It participates in amino-acid biosynthesis; L-leucine biosynthesis; L-leucine from 3-methyl-2-oxobutanoate: step 2/4. Functionally, catalyzes the isomerization between 2-isopropylmalate and 3-isopropylmalate, via the formation of 2-isopropylmaleate. The protein is 3-isopropylmalate dehydratase small subunit of Streptococcus thermophilus (strain CNRZ 1066).